A 337-amino-acid chain; its full sequence is Casein kinase I isoform alpha (337 aa).

Residues 17–285 (YKLVRKIGSG…YLRQLFRILF (269 aa)) form the Protein kinase domain. ATP is bound by residues 23-31 (IGSGSFGDI) and Lys-46. The active-site Proton acceptor is the Asp-136. The segment covering 309-325 (AASSSGQGQQAQTPTGK) has biased composition (low complexity). A disordered region spans residues 309–337 (AASSSGQGQQAQTPTGKQTDKSKSNMKGF).

The protein belongs to the protein kinase superfamily. CK1 Ser/Thr protein kinase family. Casein kinase I subfamily. In terms of processing, autophosphorylated.

Its subcellular location is the cytoplasm. It is found in the cytoskeleton. The protein resides in the microtubule organizing center. The protein localises to the centrosome. It localises to the chromosome. Its subcellular location is the centromere. It is found in the kinetochore. The protein resides in the nucleus speckle. The protein localises to the cilium basal body. It localises to the spindle. It carries out the reaction L-seryl-[protein] + ATP = O-phospho-L-seryl-[protein] + ADP + H(+). It catalyses the reaction L-threonyl-[protein] + ATP = O-phospho-L-threonyl-[protein] + ADP + H(+). Functionally, casein kinases are operationally defined by their preferential utilization of acidic proteins such as caseins as substrates. It can phosphorylate a large number of proteins. Participates in Wnt signaling. May play a role in segregating chromosomes during mitosis. May play a role in keratin cytoskeleton disassembly. This chain is Casein kinase I isoform alpha (CSNK1A1), found in Gallus gallus (Chicken).